Consider the following 2471-residue polypeptide: Neurogenic locus notch homolog protein 2 (2471 aa).

Residues Met1 to Ala25 form the signal peptide. 4 consecutive EGF-like domains span residues Leu26–Gln63, His64–Gln102, Thr105–Gln143, and Trp144–Glu180. Topologically, residues Leu26–Gln1677 are extracellular. 84 disulfides stabilise this stretch: Cys28–Cys41, Cys35–Cys51, Cys53–Cys62, Cys68–Cys79, Cys73–Cys90, Cys92–Cys101, Cys109–Cys121, Cys115–Cys131, Cys133–Cys142, Cys148–Cys159, Cys153–Cys168, Cys170–Cys179, Cys186–Cys198, Cys192–Cys207, Cys209–Cys218, Cys225–Cys236, Cys230–Cys246, Cys248–Cys257, Cys264–Cys275, Cys269–Cys284, Cys286–Cys295, Cys302–Cys315, Cys309–Cys324, Cys326–Cys335, Cys342–Cys353, Cys347–Cys362, Cys364–Cys373, Cys379–Cys390, Cys384–Cys401, Cys403–Cys412, Cys419–Cys433, Cys427–Cys442, Cys444–Cys453, Cys460–Cys471, Cys465–Cys480, Cys482–Cys491, Cys498–Cys509, Cys503–Cys518, Cys520–Cys529, Cys536–Cys547, Cys541–Cys556, Cys558–Cys567, Cys574–Cys584, Cys579–Cys593, Cys595–Cys604, Cys611–Cys622, Cys616–Cys631, Cys633–Cys642, Cys649–Cys659, Cys654–Cys668, Cys670–Cys679, Cys686–Cys697, Cys691–Cys706, Cys708–Cys717, Cys724–Cys734, Cys729–Cys743, Cys745–Cys754, Cys761–Cys772, Cys766–Cys781, Cys783–Cys792, Cys799–Cys810, Cys804–Cys819, Cys821–Cys830, Cys837–Cys848, Cys842–Cys859, Cys861–Cys870, Cys877–Cys888, Cys882–Cys897, Cys899–Cys908, Cys915–Cys926, Cys920–Cys935, Cys937–Cys946, Cys953–Cys964, Cys958–Cys973, Cys975–Cys984, Cys991–Cys1002, Cys996–Cys1011, Cys1013–Cys1022, Cys1029–Cys1040, Cys1034–Cys1049, Cys1051–Cys1060, Cys1067–Cys1078, Cys1072–Cys1087, and Cys1089–Cys1098. Asn46 carries an N-linked (GlcNAc...) asparagine glycan. N-linked (GlcNAc...) asparagine glycosylation is present at Asn155. The EGF-like 5; calcium-binding domain maps to Asp182 to Asp219. One can recognise an EGF-like 6 domain in the interval Leu221–Glu258. The EGF-like 7; calcium-binding domain occupies Asn260–Thr296. An EGF-like 8; calcium-binding domain is found at Asp298 to Ser336. The EGF-like 9; calcium-binding domain occupies Asn338 to His374. The EGF-like 10 domain occupies Leu375–Thr413. The 40-residue stretch at Asp415–Glu454 folds into the EGF-like 11; calcium-binding domain. Positions Asp456–Glu492 constitute an EGF-like 12; calcium-binding domain. One can recognise an EGF-like 13; calcium-binding domain in the interval Glu494–Gln530. The 37-residue stretch at Asp532 to Glu568 folds into the EGF-like 14; calcium-binding domain. The region spanning Asn570 to Ser605 is the EGF-like 15; calcium-binding domain. The EGF-like 16; calcium-binding domain occupies Gln607–Glu643. O-linked (Glc...) serine; alternate glycosylation is present at Ser613. O-linked (Xyl...) serine; alternate glycosylation occurs at Ser613. Residues Asn645–Asn680 form the EGF-like 17; calcium-binding domain. The region spanning Asp682–Tyr718 is the EGF-like 18; calcium-binding domain. Positions Gln720–Glu755 constitute an EGF-like 19 domain. N-linked (GlcNAc...) asparagine glycosylation is present at Asn733. In terms of domain architecture, EGF-like 20; calcium-binding spans Asp757–Gln793. Residues Asn795–Gln831 enclose the EGF-like 21; calcium-binding domain. Positions Val833–Thr871 constitute an EGF-like 22 domain. In terms of domain architecture, EGF-like 23; calcium-binding spans Asp873–Glu909. In terms of domain architecture, EGF-like 24; calcium-binding spans Asp911–Gln947. The 37-residue stretch at Asp949–Glu985 folds into the EGF-like 25; calcium-binding domain. The 37-residue stretch at Asn987–Leu1023 folds into the EGF-like 26; calcium-binding domain. Residues Glu1025–Gln1061 form the EGF-like 27; calcium-binding domain. 2 consecutive EGF-like domains span residues Leu1063–Asp1099 and Pro1101–Glu1147. An N-linked (GlcNAc...) asparagine glycan is attached at Asn1102. 24 disulfides stabilise this stretch: Cys1105-Cys1126, Cys1120-Cys1135, Cys1137-Cys1146, Cys1153-Cys1164, Cys1158-Cys1173, Cys1175-Cys1184, Cys1191-Cys1202, Cys1196-Cys1211, Cys1213-Cys1222, Cys1229-Cys1241, Cys1235-Cys1250, Cys1252-Cys1261, Cys1268-Cys1281, Cys1273-Cys1290, Cys1292-Cys1301, Cys1308-Cys1319, Cys1313-Cys1331, Cys1333-Cys1342, Cys1378-Cys1389, Cys1383-Cys1400, Cys1402-Cys1411, Cys1425-Cys1448, Cys1430-Cys1443, and Cys1439-Cys1455. Residues Gln1149–Glu1185 form the EGF-like 30; calcium-binding domain. Positions Glu1187–Glu1223 constitute an EGF-like 31; calcium-binding domain. Residues Asn1225 to Glu1262 enclose the EGF-like 32; calcium-binding domain. 3 EGF-like domains span residues Asp1264–Glu1302, Phe1304–Gln1343, and Cys1374–Glu1412. LNR repeat units lie at residues Cys1425–Asn1465, Cys1466–Thr1502, and Cys1503–Glu1544. A negative regulatory region (NRR) region spans residues Cys1425–Gln1677. The N-linked (GlcNAc...) asparagine glycan is linked to Asn1465. 7 disulfides stabilise this stretch: Cys1466–Cys1489, Cys1472–Cys1484, Cys1480–Cys1496, Cys1503–Cys1527, Cys1509–Cys1522, Cys1518–Cys1534, and Cys1632–Cys1639. Residues Leu1678–Ile1698 form a helical membrane-spanning segment. At Met1699–Ala2471 the chain is on the cytoplasmic side. Residue Thr1716 is modified to Phosphothreonine. The interval Thr1754–Pro1788 is disordered. Acidic residues predominate over residues Glu1774 to Pro1783. Ser1778 bears the Phosphoserine mark. Thr1802 bears the Phosphothreonine mark. Phosphoserine is present on Ser1804. Thr1808 is modified (phosphothreonine). ANK repeat units lie at residues Asp1827–Ala1871, Thr1876–Ala1905, Met1909–Ala1939, Asp1943–Ala1972, His1976–Met2005, and Lys2009–Ile2038. 2 positions are modified to phosphoserine: Ser1842 and Ser1845. Ser2070, Ser2078, and Ser2081 each carry phosphoserine. Disordered stretches follow at residues Phe2091–Pro2168 and Val2380–Ala2471. Position 2097 is a phosphothreonine (Thr2097). Positions Pro2098–Ser2107 are enriched in basic residues. Polar residues-rich tracts occupy residues Ala2108–Pro2117, Glu2137–Pro2150, Thr2159–Pro2168, and Ser2388–Gly2406. The span at Pro2417–Pro2445 shows a compositional bias: low complexity.

It belongs to the NOTCH family. Heterodimer of a C-terminal fragment N(TM) and an N-terminal fragment N(EC) which are probably linked by disulfide bonds. Interacts with MAML1, MAML2 and MAML3 which act as transcriptional coactivators for NOTCH2. Interacts with RELA/p65. Interacts with HIF1AN. Interacts (via ANK repeats) with TCIM, the interaction inhibits the nuclear translocation of NOTCH2 N2ICD. Interacts with CUL1, RBX1, SKP1 and FBXW7 that are SCF(FBXW7) E3 ubiquitin-protein ligase complex components. Interacts with MINAR1; this interaction increases MINAR1 stability and function. Interacts with NOTCH2NL (NOTCH2NLA, NOTCH2NLB and/or NOTCH2NLC); leading to enhance Notch signaling pathway in a non-cell-autonomous manner. Interacts with MDK; this interaction mediates a nuclear accumulation of NOTCH2 and therefore activation of NOTCH2 signaling leading to interaction between HES1 and STAT3. Interacts with MINAR2. Post-translationally, synthesized in the endoplasmic reticulum as an inactive form which is proteolytically cleaved by a furin-like convertase in the trans-Golgi network before it reaches the plasma membrane to yield an active, ligand-accessible form. Cleavage results in a C-terminal fragment N(TM) and a N-terminal fragment N(EC). Following ligand binding, it is cleaved by TNF-alpha converting enzyme (TACE) to yield a membrane-associated intermediate fragment called notch extracellular truncation (NEXT). This fragment is then cleaved by presenilin dependent gamma-secretase to release a notch-derived peptide containing the intracellular domain (NICD) from the membrane. In terms of processing, hydroxylated by HIF1AN. Can be either O-glucosylated or O-xylosylated at Ser-613 by POGLUT1. Post-translationally, phosphorylated by GSK3. GSK3-mediated phosphorylation is necessary for NOTCH2 recognition by FBXW7, ubiquitination and degradation via the ubiquitin proteasome pathway. As to expression, expressed in the brain, heart, kidney, lung, skeletal muscle and liver. Ubiquitously expressed in the embryo.

It is found in the cell membrane. The protein localises to the nucleus. Its subcellular location is the cytoplasm. Its function is as follows. Functions as a receptor for membrane-bound ligands Jagged-1 (JAG1), Jagged-2 (JAG2) and Delta-1 (DLL1) to regulate cell-fate determination. Upon ligand activation through the released notch intracellular domain (NICD) it forms a transcriptional activator complex with RBPJ/RBPSUH and activates genes of the enhancer of split locus. Affects the implementation of differentiation, proliferation and apoptotic programs. Involved in bone remodeling and homeostasis. In collaboration with RELA/p65 enhances NFATc1 promoter activity and positively regulates RANKL-induced osteoclast differentiation. Positively regulates self-renewal of liver cancer cells. In Homo sapiens (Human), this protein is Neurogenic locus notch homolog protein 2.